The primary structure comprises 309 residues: MANRPLVPGVYVPTVAFFAENEDVDVATVEKHAAYLAKSGVAGIVVQGSNGEAVHLDREERNLITSATRHALDSVGATSMPVIVGTGAPSTRETINLCKDAAAAGGDYVLVLPPSYYKSLVSSAALLDHFRAVADASPIPVLIYNFPGASAGLDLSSDDILALSSHPNIIGTKLTCGNTGKLTRIVAQAGPSFLTFGGSCDFTLQTLIGGGAGVIAGTANIIPRACVRIMELYRAGRVEEAQKVQAIVARADWLAIKGGFVAVKSALQSYRGYGQQPRRPCVAPSSEEAAALKEAFSESIELERQLESQ.

Position 49–50 (49–50 (SN)) interacts with substrate. Lys173 (schiff-base intermediate with substrate) is an active-site residue.

Belongs to the DapA family.

The catalysed reaction is (4S)-4-hydroxy-2-oxoglutarate = glyoxylate + pyruvate. The enzyme catalyses (4R)-4-hydroxy-2-oxoglutarate = glyoxylate + pyruvate. With respect to regulation, inhibited by divalent cations. Functionally, catalyzes the final step in the metabolic pathway of hydroxyproline. Involved in osmoadaptation. In Emericella nidulans (strain FGSC A4 / ATCC 38163 / CBS 112.46 / NRRL 194 / M139) (Aspergillus nidulans), this protein is Probable 4-hydroxy-2-oxoglutarate aldolase, mitochondrial.